Consider the following 642-residue polypeptide: Threonine--tRNA ligase (642 aa).

Residues 1–61 (MPIITLPDGS…SEDANLEIIT (61 aa)) form the TGS domain. A catalytic region spans residues 243–534 (DHRKIGKALD…ITEEYAGFFP (292 aa)). The Zn(2+) site is built by Cys-334, His-385, and His-511.

Belongs to the class-II aminoacyl-tRNA synthetase family. Homodimer. Requires Zn(2+) as cofactor.

The protein resides in the cytoplasm. It catalyses the reaction tRNA(Thr) + L-threonine + ATP = L-threonyl-tRNA(Thr) + AMP + diphosphate + H(+). Catalyzes the attachment of threonine to tRNA(Thr) in a two-step reaction: L-threonine is first activated by ATP to form Thr-AMP and then transferred to the acceptor end of tRNA(Thr). Also edits incorrectly charged L-seryl-tRNA(Thr). This chain is Threonine--tRNA ligase, found in Histophilus somni (strain 129Pt) (Haemophilus somnus).